The chain runs to 99 residues: MTSGLERLSNLLSKKDSVFVSDLLREAKVNELDETLSTTRLNHLIDKGYERITLQLDLGGESPGYLEKDKHYREADAALLNVIYPTNLSKINTRRKEQV.

In Escherichia coli (strain K12), this protein is Putative protein YgeP (ygeP).